Here is a 201-residue protein sequence, read N- to C-terminus: Single-stranded DNA-binding protein DdrA (201 aa).

It belongs to the RAD52 family. In terms of assembly, the truncated form (1-160) of DdrA forms heptameric rings that can assemble into a 3-ring structure.

Its function is as follows. ssDNA-binding protein that contributes to the ionizing radiation resistance of D.deserti. Plays a role in DNA repair and genome reconstitution, in a RecA-independent process, since DdrA is essential for recovery from severe genomic fragmentation as a result of exposure to severe levels of ionizing radiation in an environment lacking nutrients. In vitro, binds to the 3'-ends of single-stranded DNA, and probably protects them from nuclease degradation. Thus, DdrA is part of a DNA end-protection system that helps to preserve genome integrity following irradiation or desiccation. The polypeptide is Single-stranded DNA-binding protein DdrA (ddrA) (Deinococcus deserti (strain DSM 17065 / CIP 109153 / LMG 22923 / VCD115)).